We begin with the raw amino-acid sequence, 355 residues long: MHERRLNILLRPAALLYGLVAAVRNALFDRGMLKAWKSPIPVVSIGNLTAGGTGKTPLVDWVLKYYLSIGCRPAVVSRGYGRRSKGVQLVSDGRNILLGSTRSGDETAMLAANNPEAVVVVAEQRSEGVQFIMERFRGERPDVIILDDAFQHRQLARDLDIVVINSREPFAAAKMLPEGRLREPKSGIGRADVAVLSKITDESKADAIEAELTGSVALVARTRVVIGELSPFGPKGRSTAPHPDPAGLKALAFAGIASPASFVESLMKKGVHVVEQRFFRDHEPYTLNNFLPLVEEARRKGLTLVTTEKDRYRLEGEPGLLEKTEGVGCCCLNIATGFTRGAEKLQEMLKAVVRD.

ATP is bound at residue 49 to 56 (TAGGTGKT).

Belongs to the LpxK family.

The catalysed reaction is a lipid A disaccharide + ATP = a lipid IVA + ADP + H(+). It functions in the pathway glycolipid biosynthesis; lipid IV(A) biosynthesis; lipid IV(A) from (3R)-3-hydroxytetradecanoyl-[acyl-carrier-protein] and UDP-N-acetyl-alpha-D-glucosamine: step 6/6. Functionally, transfers the gamma-phosphate of ATP to the 4'-position of a tetraacyldisaccharide 1-phosphate intermediate (termed DS-1-P) to form tetraacyldisaccharide 1,4'-bis-phosphate (lipid IVA). The sequence is that of Tetraacyldisaccharide 4'-kinase from Chlorobium luteolum (strain DSM 273 / BCRC 81028 / 2530) (Pelodictyon luteolum).